A 172-amino-acid polypeptide reads, in one-letter code: Translation initiation factor IF-3 (172 aa).

This sequence belongs to the IF-3 family. As to quaternary structure, monomer.

It is found in the cytoplasm. Functionally, IF-3 binds to the 30S ribosomal subunit and shifts the equilibrium between 70S ribosomes and their 50S and 30S subunits in favor of the free subunits, thus enhancing the availability of 30S subunits on which protein synthesis initiation begins. The protein is Translation initiation factor IF-3 of Campylobacter fetus subsp. fetus (strain 82-40).